Consider the following 376-residue polypeptide: Glutamate 5-kinase (376 aa).

Lys-17 is a binding site for ATP. Ser-57, Asp-144, and Asn-156 together coordinate substrate. 176–177 (TD) is an ATP binding site. One can recognise a PUA domain in the interval 283–361 (KGQLVLDEGA…SEINQLLGYS (79 aa)).

This sequence belongs to the glutamate 5-kinase family.

It localises to the cytoplasm. The catalysed reaction is L-glutamate + ATP = L-glutamyl 5-phosphate + ADP. It participates in amino-acid biosynthesis; L-proline biosynthesis; L-glutamate 5-semialdehyde from L-glutamate: step 1/2. Functionally, catalyzes the transfer of a phosphate group to glutamate to form L-glutamate 5-phosphate. The chain is Glutamate 5-kinase from Hydrogenovibrio crunogenus (strain DSM 25203 / XCL-2) (Thiomicrospira crunogena).